Here is a 286-residue protein sequence, read N- to C-terminus: MAGAKEIKTKIASVKNTQKITSAMEMVAASKMRRAQDRMAASRPYAESMRKVIGHVAQGSLEYKHPYLEVREAKRVGYIVVATDRGLCGGLNVNLFKKVVADVKSWKEQGAEFEFCPIGARSVQFFKSFGGQVSAHASGLGDAPKLADLIGTVRVMLDAYNEGKLDRLYVVFNKFVNTMTQTPVIEQLLPLPKSEDDEVAHRWDYIYEPDPKALLDTLLVRYVESQVYQGVVENIASEQAARMVAMKAATDNAGTLIDDLQLVYNKARQAAITQELSEIVSGASAV.

The protein belongs to the ATPase gamma chain family. F-type ATPases have 2 components, CF(1) - the catalytic core - and CF(0) - the membrane proton channel. CF(1) has five subunits: alpha(3), beta(3), gamma(1), delta(1), epsilon(1). CF(0) has three main subunits: a, b and c.

The protein resides in the cell inner membrane. Functionally, produces ATP from ADP in the presence of a proton gradient across the membrane. The gamma chain is believed to be important in regulating ATPase activity and the flow of protons through the CF(0) complex. This chain is ATP synthase gamma chain, found in Shewanella sp. (strain MR-4).